A 263-amino-acid chain; its full sequence is Versicolorin reductase 1 (263 aa).

Residues isoleucine 22, aspartate 68, asparagine 95, and arginine 128 each contribute to the NADP(+) site. Residues serine 144 and serine 145 each act as proton donor in the active site. The NADP(+) site is built by tyrosine 159, lysine 163, isoleucine 192, and threonine 194. Tyrosine 159 serves as the catalytic Proton acceptor. Lysine 163 functions as the Lowers pKa of active site Tyr in the catalytic mechanism.

The protein belongs to the short-chain dehydrogenases/reductases (SDR) family.

It is found in the cytoplasm. The protein resides in the cytosol. It participates in mycotoxin biosynthesis. In terms of biological role, versicolorin reductase; part of the fragmented gene cluster that mediates the biosynthesis of dothistromin (DOTH), a polyketide toxin very similar in structure to the aflatoxin precursor, versicolorin B. The first step of the pathway is the conversion of acetate to norsolorinic acid (NOR) and requires the fatty acid synthase subunits hexA and hexB, as well as the polyketide synthase pksA. PksA combines a hexanoyl starter unit and 7 malonyl-CoA extender units to synthesize the precursor NOR. The hexanoyl starter unit is provided to the acyl-carrier protein (ACP) domain by the fungal fatty acid synthase hexA/hexB. The second step is the conversion of NOR to averantin (AVN) and requires the norsolorinic acid ketoreductase nor1, which catalyzes the dehydration of norsolorinic acid to form (1'S)-averantin. The cytochrome P450 monooxygenase avnA then catalyzes the hydroxylation of AVN to 5'hydroxyaverantin (HAVN). The next step is performed by adhA that transforms HAVN to averufin (AVF). Averufin might then be converted to hydroxyversicolorone by cypX and avfA. Hydroxyversicolorone is further converted versiconal hemiacetal acetate (VHA) by moxY. VHA is then the substrate for the versiconal hemiacetal acetate esterase est1 to yield versiconal (VAL). Versicolorin B synthase vbsA then converts VAL to versicolorin B (VERB) by closing the bisfuran ring. Then, the activity of the versicolorin B desaturase verB leads to versicolorin A (VERA). DotB, a predicted chloroperoxidase, may perform epoxidation of the A-ring of VERA. Alternatively, a cytochrome P450, such as cypX or avnA could catalyze this step. It is also possible that another, uncharacterized, cytochrome P450 enzyme is responsible for this step. Opening of the epoxide could potentially be achieved by the epoxide hydrolase epoA. However, epoA seems not to be required for DOTH biosynthesis, but other epoxide hydrolases may have the ability to complement this hydrolysis. Alternatively, opening of the epoxide ring could be achieved non-enzymatically. The next step is the deoxygenation of ring A to yield the 5,8-dihydroxyanthraquinone which is most likely catalyzed by the NADPH dehydrogenase encoded by ver1. The last stages of DOTH biosynthesis are proposed to involve hydroxylation of the bisfuran. OrdB and norB might have oxidative roles here. An alternative possibility is that cytochrome P450 monoogenases such as avnA and cypX might perform these steps in addition to previously proposed steps. This chain is Versicolorin reductase 1, found in Dothistroma septosporum (Red band needle blight fungus).